We begin with the raw amino-acid sequence, 297 residues long: Phospholipid scramblase 2 (297 aa).

The proline-rich domain (PRD) stretch occupies residues Met1 to Pro72. At Met1–Lys276 the chain is on the cytoplasmic side. Phosphothreonine; by PKC is present on Thr149. 5 S-palmitoyl cysteine lipidation sites follow: Cys172, Cys173, Cys174, Cys176, and Cys177. A helical transmembrane segment spans residues Met277–Phe293. Residues Glu294–Arg297 lie on the Extracellular side of the membrane.

It belongs to the phospholipid scramblase family. The cofactor is Ca(2+). In terms of tissue distribution, expression of isoform 1 seems restricted to testis.

Its subcellular location is the membrane. It localises to the nucleus. It catalyses the reaction a 1,2-diacyl-sn-glycero-3-phosphocholine(in) = a 1,2-diacyl-sn-glycero-3-phosphocholine(out). May catalyze calcium-induced ATP-independent rapid bidirectional and non-specific movement of phospholipids (lipid scrambling or lipid flip-flop) between the inner and outer leaflet of the plasma membrane. Its function is as follows. Has no phospholipid scramblase activity, due to the lack of a N-terminal proline-rich domain. The protein is Phospholipid scramblase 2 of Homo sapiens (Human).